Here is a 231-residue protein sequence, read N- to C-terminus: uncharacterized protein (231 aa).

An NADP(+)-binding site is contributed by Ile10–Val34. Position 140 (Ser140) interacts with substrate. Tyr153 acts as the Proton acceptor in catalysis.

Belongs to the short-chain dehydrogenases/reductases (SDR) family.

This is an uncharacterized protein from Staphylococcus haemolyticus (strain JCSC1435).